The following is an 88-amino-acid chain: Large ribosomal subunit protein eL37 (88 aa).

4 residues coordinate Zn(2+): Cys17, Cys20, Cys32, and Cys35. The C4-type zinc finger occupies 17–35 (CNRCGRRSFHVQKKTCSSC).

It belongs to the eukaryotic ribosomal protein eL37 family. Requires Zn(2+) as cofactor.

In terms of biological role, binds to the 23S rRNA. The protein is Large ribosomal subunit protein eL37 (RPL37) of Candida albicans (Yeast).